We begin with the raw amino-acid sequence, 490 residues long: Protein U94 (490 aa).

The 210-residue stretch at 1 to 210 (MFSIINPSDD…SHFNKKPNVK (210 aa)) folds into the PV NS1-Nuc domain. The SF3 helicase domain maps to 312 to 463 (DPILAGTILY…IPRNFPVIQK (152 aa)). 338 to 345 (GPPGCGKS) is an ATP binding site.

The protein localises to the host nucleus. In Human herpesvirus 6B (HHV-6 variant B), this protein is Protein U94 (U94).